A 177-amino-acid chain; its full sequence is Ubiquinol-cytochrome c reductase iron-sulfur subunit (177 aa).

Residues 18-38 (MVLTASSVAAVGAVCTLWPLV) traverse the membrane as a helical segment. One can recognise a Rieske domain in the interval 88-175 (ARAVKMSELI…YTFISDKKIR (88 aa)). Positions 120, 122, 139, and 142 each coordinate [2Fe-2S] cluster. Residues cysteine 125 and cysteine 141 are joined by a disulfide bond.

The protein belongs to the Rieske iron-sulfur protein family. As to quaternary structure, the main subunits of complex b-c1 are: cytochrome b, cytochrome c1 and the Rieske protein. [2Fe-2S] cluster is required as a cofactor.

It localises to the cell membrane. It catalyses the reaction a quinol + 2 Fe(III)-[cytochrome c](out) = a quinone + 2 Fe(II)-[cytochrome c](out) + 2 H(+)(out). In terms of biological role, component of the ubiquinol-cytochrome c reductase complex (complex III or cytochrome b-c1 complex), which is a respiratory chain that generates an electrochemical potential coupled to ATP synthesis. This is Ubiquinol-cytochrome c reductase iron-sulfur subunit (petA) from Rickettsia felis (strain ATCC VR-1525 / URRWXCal2) (Rickettsia azadi).